Consider the following 267-residue polypeptide: MLKIGIVGCGAIGNFITKKVLDGTIKNAKISAVYDRNFDKAKTLSERTGAKICSSIDDLVKEDLDLVVEAASIKAVEEIAEKSLINNKDVLIMSVGALADKKLFLKLRDLAKTVGRKIYLPSGAIGGLDAIKALRLGEIEEVVLKTTKPVAALEDALKNLGYKPEDIKNPVIVFEGDVFKAIKEFPANINVSVTLSIAAEFPAKVVIVADPNAKLNKHELFVKSSIGTLRVCIENVPFEENPRTSALAAYSAVRLIRDLAEPVKVGT.

Positions 124 and 190 each coordinate NAD(+). His-218 is a catalytic residue.

It belongs to the L-aspartate dehydrogenase family.

It catalyses the reaction L-aspartate + NADP(+) + H2O = oxaloacetate + NH4(+) + NADPH + H(+). The catalysed reaction is L-aspartate + NAD(+) + H2O = oxaloacetate + NH4(+) + NADH + H(+). Its pathway is cofactor biosynthesis; NAD(+) biosynthesis; iminoaspartate from L-aspartate (dehydrogenase route): step 1/1. Specifically catalyzes the NAD or NADP-dependent dehydrogenation of L-aspartate to iminoaspartate. The sequence is that of L-aspartate dehydrogenase from Methanocaldococcus jannaschii (strain ATCC 43067 / DSM 2661 / JAL-1 / JCM 10045 / NBRC 100440) (Methanococcus jannaschii).